We begin with the raw amino-acid sequence, 337 residues long: Phenylalanine--tRNA ligase alpha subunit (337 aa).

Residue glutamate 252 participates in Mg(2+) binding.

Belongs to the class-II aminoacyl-tRNA synthetase family. Phe-tRNA synthetase alpha subunit type 1 subfamily. In terms of assembly, tetramer of two alpha and two beta subunits. The cofactor is Mg(2+).

The protein localises to the cytoplasm. It carries out the reaction tRNA(Phe) + L-phenylalanine + ATP = L-phenylalanyl-tRNA(Phe) + AMP + diphosphate + H(+). In Cellvibrio japonicus (strain Ueda107) (Pseudomonas fluorescens subsp. cellulosa), this protein is Phenylalanine--tRNA ligase alpha subunit.